The primary structure comprises 451 residues: Aspartate aminotransferase, mitochondrial (451 aa).

L-aspartate is bound by residues Gly52, Trp155, and Asn216. Residue Lys286 is modified to N6-(pyridoxal phosphate)lysine. Residue Arg423 participates in L-aspartate binding.

Belongs to the class-I pyridoxal-phosphate-dependent aminotransferase family. As to quaternary structure, homodimer. The cofactor is pyridoxal 5'-phosphate.

It localises to the mitochondrion matrix. It catalyses the reaction L-aspartate + 2-oxoglutarate = oxaloacetate + L-glutamate. In terms of biological role, plays a key role in amino acid metabolism. Important for metabolite exchange between mitochondria and cytosol. This is Aspartate aminotransferase, mitochondrial (AAT1) from Saccharomyces cerevisiae (strain ATCC 204508 / S288c) (Baker's yeast).